The primary structure comprises 686 residues: tRNA wybutosine-synthesizing protein 4 (686 aa).

The disordered stretch occupies residues 1–22 (MGPRSRQRRTGTVQSTNDSSSL). Residues 10–22 (TGTVQSTNDSSSL) show a composition bias toward polar residues. S-adenosyl-L-methionine is bound by residues Arg59, Gly89, Asp114, 161–162 (DL), and Glu188.

Belongs to the methyltransferase superfamily. LCMT family. Interacts with RNF144B/IBRDC2.

It catalyses the reaction 7-[(3S)-3-amino-3-carboxypropyl]wyosine(37) in tRNA(Phe) + S-adenosyl-L-methionine = 7-[(3S)-(3-amino-3-methoxycarbonyl)propyl]wyosine(37) in tRNA(Phe) + S-adenosyl-L-homocysteine. It carries out the reaction 7-[(3S)-(3-amino-3-methoxycarbonyl)propyl]wyosine(37) in tRNA(Phe) + S-adenosyl-L-methionine + CO2 = wybutosine(37) in tRNA(Phe) + S-adenosyl-L-homocysteine + 2 H(+). The protein operates within tRNA modification; wybutosine-tRNA(Phe) biosynthesis. Its function is as follows. Probable S-adenosyl-L-methionine-dependent methyltransferase that acts as a component of the wybutosine biosynthesis pathway. Wybutosine is a hyper modified guanosine with a tricyclic base found at the 3'-position adjacent to the anticodon of eukaryotic phenylalanine tRNA. May methylate the carboxyl group of leucine residues to form alpha-leucine ester residues. This is tRNA wybutosine-synthesizing protein 4 (Lcmt2) from Rattus norvegicus (Rat).